A 523-amino-acid polypeptide reads, in one-letter code: 2-isopropylmalate synthase (523 aa).

A Pyruvate carboxyltransferase domain is found at valine 5–tryptophan 267. Mn(2+) is bound by residues aspartate 14, histidine 202, histidine 204, and asparagine 238. The tract at residues arginine 392–valine 523 is regulatory domain.

It belongs to the alpha-IPM synthase/homocitrate synthase family. LeuA type 1 subfamily. As to quaternary structure, homodimer. It depends on Mn(2+) as a cofactor.

Its subcellular location is the cytoplasm. The enzyme catalyses 3-methyl-2-oxobutanoate + acetyl-CoA + H2O = (2S)-2-isopropylmalate + CoA + H(+). The protein operates within amino-acid biosynthesis; L-leucine biosynthesis; L-leucine from 3-methyl-2-oxobutanoate: step 1/4. In terms of biological role, catalyzes the condensation of the acetyl group of acetyl-CoA with 3-methyl-2-oxobutanoate (2-ketoisovalerate) to form 3-carboxy-3-hydroxy-4-methylpentanoate (2-isopropylmalate). The polypeptide is 2-isopropylmalate synthase (Salmonella agona (strain SL483)).